The following is a 337-amino-acid chain: ADP-ribosylation factor GTPase-activating protein AGD12 (337 aa).

The Arf-GAP domain occupies 15-137 (KRRIRDLLTQ…EFLKPSLRIT (123 aa)). The segment at 30 to 53 (CADCGAPDPKWASANIGVFICLKC) adopts a C4-type zinc-finger fold. Residues 164–281 (TNSSSQQPQL…AMAFGDPEMF (118 aa)) enclose the C2 domain. Ca(2+) is bound by residues aspartate 250, serine 253, and aspartate 256.

It depends on Ca(2+) as a cofactor. Expressed in roots, leaves, flowers and siliques. Low levels of expression in seeds and stems.

Its subcellular location is the golgi apparatus. It localises to the cell membrane. Functionally, GTPase-activating protein (GAP) for ADP ribosylation factor (ARF). Binds phosphatidylinositol 3-monophosohate (PI-3-P) and anionic phospholipids. This Arabidopsis thaliana (Mouse-ear cress) protein is ADP-ribosylation factor GTPase-activating protein AGD12 (AGD12).